Here is a 1271-residue protein sequence, read N- to C-terminus: Protein flightless-1 homolog (1271 aa).

An N-acetylmethionine modification is found at M1. Residues 1–427 are interaction with LRRFIP1 and LRRFIP2; that stretch reads MEATGVLPFV…SGSKDPLARK (427 aa). 16 LRR repeats span residues 7–32, 33–55, 56–78, 80–103, 104–126, 127–149, 150–173, 175–196, 197–222, 223–245, 247–268, 269–291, 293–316, 317–339, 340–363, and 365–385; these read LPFVRGVDLSGNDFKGGYFPENVKAM, TSLRWLKLNRTGLCYLPEELAAL, QKLEHLSVSHNHLTTLHGELSSL, SLRAIVARANSLKNSGVPDDIFKL, DDLSVLDLSHNQLTECPRELENA, KNMLVLNLSHNGIDSIPNQLFIN, LTDLLYLDLSENRLESLPPQMRRL, HLQTLVLNGNPLLHAQLRQLPA, MMALQTLHLRNTQRTQSNLPTSLEGL, SNLSDVDLSCNDLTRVPECLYTL, SLRRLNLSSNQIAELSLCIDQW, VHLETLNLSRNQLTSLPSAICKL, KLKKLYLNSNKLDFDGLPSGIGKL, TSLEEFMAANNNLELIPESLCRC, PKLKKLVLNKNRLVTLPEAIHFLT, and IQVLDVRENPSLVMPPKPADR. K21 carries the N6-acetyllysine modification. Residue S406 is modified to Phosphoserine. Residue S436 is modified to Phosphoserine; by SGK3. An interaction with ACTL6A region spans residues 495 to 827; the sequence is VGQLPGLTIW…VVSRSLEGTE (333 aa). Gelsolin-like repeat units follow at residues 509-591, 629-703, and 759-831; these read FVPV…EEFL, NIKL…PGFW, and LMPG…AQVF. S860 carries the post-translational modification Phosphoserine. The interval 951 to 977 is disordered; sequence KTEDKEGKASAEAREGEEAAAEAEEKQ. A compositionally biased stretch (basic and acidic residues) spans 952–967; sequence TEDKEGKASAEAREGE. The segment covering 968-977 has biased composition (acidic residues); sequence EAAAEAEEKQ. Residues 1183–1256 form a Gelsolin-like 4 repeat; it reads KCSDFCQDDL…VRKGNEQRAF (74 aa).

As to quaternary structure, interacts with actin, ACTL6A and NCOA2. Interacts with CARM1. Interacts with LRRFIP1, LRRFIP2 and MYD88. Upon LPS stimulation, LRRFIP2 competes for MYD88-binding; LRRFIP1 constitutively blocks the interaction with MyD88, even in the absence of LPS. Interacts with the nuclear receptors ESR1 and THRB. Interacts with SGK3. Interacts (via the gelsolin-like region) with TMOD1 and TMOD3. Interacts with LMOD2, VCL, GSN and DES. Expressed in blastocyst.

Its subcellular location is the nucleus. It is found in the cytoplasm. It localises to the cytoskeleton. The protein resides in the microtubule organizing center. The protein localises to the centrosome. Its subcellular location is the cell junction. It is found in the focal adhesion. It localises to the cell projection. The protein resides in the podosome. Is a regulator of actin polymerization, required for proper myofibril organization and regulation of the length of sarcomeric thin filaments. It also plays a role in the assembly of cardiomyocyte cell adhesion complexes. Regulates cytoskeletal rearrangements involved in cytokinesis and cell migration, by inhibiting Rac1-dependent paxillin phosphorylation. May play a role as coactivator in transcriptional activation by hormone-activated nuclear receptors (NR) and acts in cooperation with NCOA2 and CARM1. Involved in estrogen hormone signaling. In Mus musculus (Mouse), this protein is Protein flightless-1 homolog (Flii).